A 427-amino-acid polypeptide reads, in one-letter code: Endothelin-1 receptor (427 aa).

The N-terminal stretch at 1-20 (METFWLRVSFWVALVGGVIS) is a signal peptide. Residues 21–80 (DNPESYSTNLSIHVDSVTTFRGTELSFVVTTHQPTNLALPSNGSMHNYCPQQTKITSAFK) lie on the Extracellular side of the membrane. 2 N-linked (GlcNAc...) asparagine glycosylation sites follow: asparagine 29 and asparagine 62. Residues 81-102 (YINTVISCTIFIVGMVGNATLL) form a helical membrane-spanning segment. Over 103–112 (RIIYQNKCMR) the chain is Cytoplasmic. Residues 113–132 (NGPNALIASLALGDLIYVVI) form a helical membrane-spanning segment. The Extracellular portion of the chain corresponds to 133 to 159 (DLPINVFKLLAGRWPFEQNDFGVFLCK). A disulfide bridge connects residues cysteine 158 and cysteine 239. Residues 160-181 (LFPFLQKSSVGITVLNLCALSV) form a helical membrane-spanning segment. Over 182 to 205 (DRYRAVASWSRVQGIGIPLVTAIE) the chain is Cytoplasmic. A helical transmembrane segment spans residues 206-229 (IVSIWILSFILAIPEAIGFVMVPF). At 230-256 (EYKGAQHRTCMLNATSKFMEFYQDVKD) the chain is on the extracellular side. The chain crosses the membrane as a helical span at residues 257-278 (WWLFGFYFCMPLVCTAIFYTLM). Over 279–306 (TCEMLNRRNGSLRIALSEHLKQRREVAK) the chain is Cytoplasmic. The helical transmembrane segment at 307–328 (TVFCLVVIFALCWFPLHLSRIL) threads the bilayer. Topologically, residues 329–347 (KKTVYDEMDTNRCELLSFL) are extracellular. A helical membrane pass occupies residues 348–372 (LLMDYIGINLATMNSCINPIALYFV). Residues 373-427 (SKKFKNCFQSCLCCCCYQSKSLMTSVPMNGTSIQWKNPEQNNHNTERSSHKDSIN) are Cytoplasmic-facing. A compositionally biased stretch (polar residues) spans 405–415 (IQWKNPEQNNH). The interval 405–427 (IQWKNPEQNNHNTERSSHKDSIN) is disordered. Basic and acidic residues predominate over residues 416 to 427 (NTERSSHKDSIN). The residue at position 425 (serine 425) is a Phosphoserine.

It belongs to the G-protein coupled receptor 1 family. Endothelin receptor subfamily. EDNRA sub-subfamily. In terms of assembly, interacts with HDAC7 and KAT5.

The protein localises to the cell membrane. In terms of biological role, receptor for endothelin-1. Mediates its action by association with G proteins that activate a phosphatidylinositol-calcium second messenger system. The rank order of binding affinities for ET-A is: ET1 &gt; ET2 &gt;&gt; ET3. The chain is Endothelin-1 receptor from Ovis aries (Sheep).